Consider the following 413-residue polypeptide: Transcription factor bHLH23 (413 aa).

The disordered stretch occupies residues 40 to 75 (SSQTQTPSCDPPLILRGSGSGDGEGNGPLPQPPPPL). Position 186 is a phosphothreonine (Thr-186). Ser-191 carries the post-translational modification Phosphoserine. 2 disordered regions span residues 232 to 278 (TEPV…RSRA) and 391 to 413 (ETEQ…KMFS). The span at 246 to 257 (TDERKRKTREET) shows a compositional bias: basic and acidic residues. Residues 277-326 (RAAIMHKLSERRRRQKINEMMKALQELLPRCTKTDRSSMLDDVIEYVKSL) enclose the bHLH domain.

Homodimer. As to expression, expressed constitutively in leaves, stems, and flowers.

The protein resides in the nucleus. This chain is Transcription factor bHLH23 (BHLH23), found in Arabidopsis thaliana (Mouse-ear cress).